Reading from the N-terminus, the 260-residue chain is Putative protein phosphatase (260 aa).

The PPM-type phosphatase domain maps to 9–254 (FTGLSKKGPV…DNITAALVNL (246 aa)).

The enzyme catalyses O-phospho-L-seryl-[protein] + H2O = L-seryl-[protein] + phosphate. The catalysed reaction is O-phospho-L-threonyl-[protein] + H2O = L-threonyl-[protein] + phosphate. This Mycoplasma genitalium (strain ATCC 33530 / DSM 19775 / NCTC 10195 / G37) (Mycoplasmoides genitalium) protein is Putative protein phosphatase.